The chain runs to 318 residues: Beta-galactosidase small subunit (318 aa).

Belongs to the bacterial beta-galactosidase small subunit family. As to quaternary structure, heterodimer of a large (LacL) and a small subunit (LacM).

It catalyses the reaction Hydrolysis of terminal non-reducing beta-D-galactose residues in beta-D-galactosides.. In terms of biological role, component of a beta-galactosidase. This chain is Beta-galactosidase small subunit, found in Latilactobacillus sakei (Lactobacillus sakei).